The following is a 376-amino-acid chain: Homocitrate synthase (376 aa).

Residues 4–259 (WKIIDSTLRE…RRKYKLEMLP (256 aa)) form the Pyruvate carboxyltransferase domain. 2-oxoglutarate is bound at residue Arg12. Position 13 (Glu13) interacts with Mg(2+). His72 serves as a coordination point for 2-oxoglutarate. Residue Asp92 coordinates L-lysine. Arg133 serves as a coordination point for 2-oxoglutarate. L-lysine-binding residues include Ser135 and Thr166. Thr166 contributes to the 2-oxoglutarate binding site. Mg(2+) contacts are provided by His195 and His197. His292 functions as the Proton acceptor in the catalytic mechanism.

Belongs to the alpha-IPM synthase/homocitrate synthase family. Homocitrate synthase LYS20/LYS21 subfamily. Exists in an equilibrium between monomer and homodimer. It depends on Mg(2+) as a cofactor. The cofactor is Mn(2+).

It is found in the cytoplasm. The enzyme catalyses acetyl-CoA + 2-oxoglutarate + H2O = (2R)-homocitrate + CoA + H(+). The catalysed reaction is oxaloacetate + acetyl-CoA + H2O = citrate + CoA + H(+). It participates in amino-acid biosynthesis; L-lysine biosynthesis via AAA pathway; L-alpha-aminoadipate from 2-oxoglutarate: step 1/5. With respect to regulation, is highly and competitively inhibited by lysine that binds to the active site and competes with 2-oxoglutarate. Is also slightly inhibited by arginine and 2-aminoethylcysteine. Its function is as follows. Catalyzes the aldol-type condensation of 2-oxoglutarate with acetyl-CoA to yield homocitrate. Carries out the first step of the alpha-aminoadipate (AAA) lysine biosynthesis pathway. To a lesser extent, can also use oxaloacetate in place of 2-oxoglutarate, leading to citrate. Does not display 2-isopropylmalate synthase activity since it cannot use 2-oxoisovalerate. The polypeptide is Homocitrate synthase (Thermus thermophilus (strain ATCC BAA-163 / DSM 7039 / HB27)).